Reading from the N-terminus, the 197-residue chain is MKIPPFVLASASPARRRLLETVGIEPIVRASDFDESQIQLSEPAELVKTLAQCKAETVAPQFESALIMGCDSVLSMNGEIHGKPADTSEAIARWQIMQGNFGDLYTGHALIDLEQNRTIVKSQVTRVYFAQMSDRAILAYVATGEPLKCAGAFAIEGFGSFFVEKIEGCHSNVIGLSLPLLRHILAELGYDVTDFWQ.

Aspartate 71 (proton acceptor) is an active-site residue.

Belongs to the Maf family. Requires a divalent metal cation as cofactor.

The protein resides in the cytoplasm. It catalyses the reaction a ribonucleoside 5'-triphosphate + H2O = a ribonucleoside 5'-phosphate + diphosphate + H(+). It carries out the reaction a 2'-deoxyribonucleoside 5'-triphosphate + H2O = a 2'-deoxyribonucleoside 5'-phosphate + diphosphate + H(+). Nucleoside triphosphate pyrophosphatase. May have a dual role in cell division arrest and in preventing the incorporation of modified nucleotides into cellular nucleic acids. This Nostoc punctiforme (strain ATCC 29133 / PCC 73102) protein is Nucleoside triphosphate pyrophosphatase.